Here is a 379-residue protein sequence, read N- to C-terminus: Carbamoyl phosphate synthase small chain (379 aa).

Residues 1–183 form a CPSase region; that stretch reads MTSQDRSEAV…EAYVVEPDGE (183 aa). 3 residues coordinate L-glutamine: Ser51, Gly235, and Gly237. Positions 185–379 constitute a Glutamine amidotransferase type-1 domain; sequence LYTVVAYDMG…FVELIQANKK (195 aa). Cys263 acts as the Nucleophile in catalysis. L-glutamine contacts are provided by Phe264, Gln267, Asn305, Gly307, and Phe308. Active-site residues include His353 and Glu355.

This sequence belongs to the CarA family. As to quaternary structure, composed of two chains; the small (or glutamine) chain promotes the hydrolysis of glutamine to ammonia, which is used by the large (or ammonia) chain to synthesize carbamoyl phosphate. Tetramer of heterodimers (alpha,beta)4.

The catalysed reaction is hydrogencarbonate + L-glutamine + 2 ATP + H2O = carbamoyl phosphate + L-glutamate + 2 ADP + phosphate + 2 H(+). It carries out the reaction L-glutamine + H2O = L-glutamate + NH4(+). The protein operates within amino-acid biosynthesis; L-arginine biosynthesis; carbamoyl phosphate from bicarbonate: step 1/1. Its pathway is pyrimidine metabolism; UMP biosynthesis via de novo pathway; (S)-dihydroorotate from bicarbonate: step 1/3. Its function is as follows. Small subunit of the glutamine-dependent carbamoyl phosphate synthetase (CPSase). CPSase catalyzes the formation of carbamoyl phosphate from the ammonia moiety of glutamine, carbonate, and phosphate donated by ATP, constituting the first step of 2 biosynthetic pathways, one leading to arginine and/or urea and the other to pyrimidine nucleotides. The small subunit (glutamine amidotransferase) binds and cleaves glutamine to supply the large subunit with the substrate ammonia. The protein is Carbamoyl phosphate synthase small chain of Corynebacterium diphtheriae (strain ATCC 700971 / NCTC 13129 / Biotype gravis).